A 185-amino-acid polypeptide reads, in one-letter code: Large ribosomal subunit protein uL6m (185 aa).

The protein belongs to the universal ribosomal protein uL6 family.

The protein localises to the mitochondrion. The sequence is that of Large ribosomal subunit protein uL6m (RPL6) from Reclinomonas americana.